The following is a 638-amino-acid chain: Sodium- and chloride-dependent neutral and basic amino acid transporter B(0+) (638 aa).

Residues 1–44 (MDRLKCPNFFKCRQKEKVTASSENFHVGENDENQERGNWSKKSD) lie on the Cytoplasmic side of the membrane. 3 helical membrane passes run 45 to 65 (YLLS…FPYL), 72 to 92 (GAFL…LFFL), and 110 to 130 (ILPL…FVAI). At 131–230 (YYNVIIAYSL…RSSGMDETGV (100 aa)) the chain is on the extracellular side. N-linked (GlcNAc...) asparagine glycosylation is found at N155, N163, N174, N185, N193, and N198. The next 2 helical transmembrane spans lie at 231–251 (VVWY…AALF) and 257–277 (SGKV…ILLI). N-linked (GlcNAc...) asparagine glycosylation occurs at N298. Transmembrane regions (helical) follow at residues 311–331 (AATQ…ALSS), 344–364 (IIVC…IFSI), 395–415 (LAQL…LLTL), 453–473 (ILFL…VHLI), 476–496 (FCAG…IIWI), 524–544 (CWFV…LVKF), and 559–579 (VALG…MAII). Residues 580-638 (KIVQAEGNILQRIISCCRPASNWGPYLEKHRGERYRDMAEPAKETDHEIPTISGSTKPE) lie on the Cytoplasmic side of the membrane. Basic and acidic residues predominate over residues 618–628 (AEPAKETDHEI). Positions 618–638 (AEPAKETDHEIPTISGSTKPE) are disordered.

It belongs to the sodium:neurotransmitter symporter (SNF) (TC 2.A.22) family. SLC6A14 subfamily. Expressed in the distal region of the intestinal tract: cecum and colon.

It localises to the membrane. Its subcellular location is the apical cell membrane. It carries out the reaction glycine(out) + chloride(out) + 2 Na(+)(out) = glycine(in) + chloride(in) + 2 Na(+)(in). It catalyses the reaction L-leucine(out) + chloride(out) + 2 Na(+)(out) = L-leucine(in) + chloride(in) + 2 Na(+)(in). The catalysed reaction is L-glutamine(out) + chloride(out) + 2 Na(+)(out) = L-glutamine(in) + chloride(in) + 2 Na(+)(in). The enzyme catalyses L-arginine(out) + chloride(out) + 2 Na(+)(out) = L-arginine(in) + chloride(in) + 2 Na(+)(in). It carries out the reaction (R)-carnitine(out) + chloride(out) + 2 Na(+)(out) = (R)-carnitine(in) + chloride(in) + 2 Na(+)(in). It catalyses the reaction O-propanoyl-(R)-carnitine(out) + chloride(out) + 2 Na(+)(out) = O-propanoyl-(R)-carnitine(in) + chloride(in) + 2 Na(+)(in). The catalysed reaction is L-isoleucine(out) + chloride(out) + 2 Na(+)(out) = L-isoleucine(in) + chloride(in) + 2 Na(+)(in). The enzyme catalyses L-methionine(out) + chloride(out) + 2 Na(+)(out) = L-methionine(in) + chloride(in) + 2 Na(+)(in). It carries out the reaction L-valine(out) + chloride(out) + 2 Na(+)(out) = L-valine(in) + chloride(in) + 2 Na(+)(in). It catalyses the reaction L-alanine(out) + chloride(out) + 2 Na(+)(out) = L-alanine(in) + chloride(in) + 2 Na(+)(in). The catalysed reaction is L-serine(out) + chloride(out) + 2 Na(+)(out) = L-serine(in) + chloride(in) + 2 Na(+)(in). The enzyme catalyses L-cysteine(out) + chloride(out) + 2 Na(+)(out) = L-cysteine(in) + chloride(in) + 2 Na(+)(in). It carries out the reaction L-asparagine(out) + chloride(out) + 2 Na(+)(out) = L-asparagine(in) + chloride(in) + 2 Na(+)(in). It catalyses the reaction L-threonine(out) + chloride(out) + 2 Na(+)(out) = L-threonine(in) + chloride(in) + 2 Na(+)(in). The catalysed reaction is L-phenylalanine(out) + chloride(out) + 2 Na(+)(out) = L-phenylalanine(in) + chloride(in) + 2 Na(+)(in). The enzyme catalyses L-tryptophan(out) + chloride(out) + 2 Na(+)(out) = L-tryptophan(in) + chloride(in) + 2 Na(+)(in). It carries out the reaction L-tyrosine(out) + chloride(out) + 2 Na(+)(out) = L-tyrosine(in) + chloride(in) + 2 Na(+)(in). It catalyses the reaction L-histidine(out) + chloride(out) + 2 Na(+)(out) = L-histidine(in) + chloride(in) + 2 Na(+)(in). The catalysed reaction is L-lysine(out) + chloride(out) + 2 Na(+)(out) = L-lysine(in) + chloride(in) + 2 Na(+)(in). The enzyme catalyses O-butanoyl-(R)-carnitine(out) + chloride(out) + 2 Na(+)(out) = O-butanoyl-(R)-carnitine(in) + chloride(in) + 2 Na(+)(in). Its function is as follows. Amino acid transporter that plays an important role in the absorption of amino acids in the intestinal tract. Mediates the uptake of a broad range of neutral and cationic amino acids (with the exception of proline) in a Na(+)/Cl(-)-dependent manner. Transports non-alpha-amino acids such as beta-alanine with low affinity, and has a higher affinity for dipolar and cationic amino acids such as leucine and lysine. Can also transport carnitine, butyrylcarnitine and propionylcarnitine coupled to the transmembrane gradients of Na(+) and Cl(-). This Mus musculus (Mouse) protein is Sodium- and chloride-dependent neutral and basic amino acid transporter B(0+).